Reading from the N-terminus, the 416-residue chain is UDP-N-acetylmuramoylalanine--D-glutamate ligase (416 aa).

104-110 (GSNGKST) is a binding site for ATP.

It belongs to the MurCDEF family.

It localises to the cytoplasm. It catalyses the reaction UDP-N-acetyl-alpha-D-muramoyl-L-alanine + D-glutamate + ATP = UDP-N-acetyl-alpha-D-muramoyl-L-alanyl-D-glutamate + ADP + phosphate + H(+). It participates in cell wall biogenesis; peptidoglycan biosynthesis. Functionally, cell wall formation. Catalyzes the addition of glutamate to the nucleotide precursor UDP-N-acetylmuramoyl-L-alanine (UMA). This is UDP-N-acetylmuramoylalanine--D-glutamate ligase from Francisella tularensis subsp. tularensis (strain WY96-3418).